A 731-amino-acid polypeptide reads, in one-letter code: 1,4-alpha-glucan branching enzyme GlgB (731 aa).

Catalysis depends on Asp411, which acts as the Nucleophile. The active-site Proton donor is the Glu464.

This sequence belongs to the glycosyl hydrolase 13 family. GlgB subfamily. Monomer.

It catalyses the reaction Transfers a segment of a (1-&gt;4)-alpha-D-glucan chain to a primary hydroxy group in a similar glucan chain.. It functions in the pathway glycan biosynthesis; glycogen biosynthesis. Its function is as follows. Catalyzes the formation of the alpha-1,6-glucosidic linkages in glycogen by scission of a 1,4-alpha-linked oligosaccharide from growing alpha-1,4-glucan chains and the subsequent attachment of the oligosaccharide to the alpha-1,6 position. The chain is 1,4-alpha-glucan branching enzyme GlgB from Mycolicibacterium paratuberculosis (strain ATCC BAA-968 / K-10) (Mycobacterium paratuberculosis).